Consider the following 137-residue polypeptide: Profilin-3 (137 aa).

Belongs to the profilin family. Interacts with ACTRT3. As to expression, detected in round spermatids.

Its subcellular location is the cytoplasm. It is found in the cytoskeleton. The protein localises to the nucleus. Its function is as follows. Binds to actin and affects the structure of the cytoskeleton. Slightly reduces actin polymerization. Binds to poly-L-proline, phosphatidylinositol 3-phosphate (PtdIns(3)P), phosphatidylinositol 4,5-bisphosphate (PtdIns(4,5)P2), and phosphatidylinositol 4-phosphate (PtdIns(4)P). May be involved in spermatogenesis. The polypeptide is Profilin-3 (Pfn3) (Rattus norvegicus (Rat)).